The sequence spans 310 residues: Translocator protein BipD (310 aa).

Coiled-coil stretches lie at residues 127–171 and 250–299; these read DPIL…LQDY and DTAR…AIST.

This sequence belongs to the invasin protein D family.

The protein localises to the secreted. Required for invasion of epithelial cells, as well as for survival within host cells, escape from endocytic vesicles and subsequent actin-tail formation. Probably regulates the secretion of effectors BipB and BipC and their final integration into the target cell membrane. The protein is Translocator protein BipD (bipD) of Burkholderia mallei (strain NCTC 10247).